Here is a 469-residue protein sequence, read N- to C-terminus: uncharacterized protein (469 aa).

The tract at residues A203–G244 is disordered.

Belongs to the epstein-barr virus LF1 family.

This is an uncharacterized protein from Epstein-Barr virus (strain AG876) (HHV-4).